Reading from the N-terminus, the 195-residue chain is U8 snoRNA-decapping enzyme (195 aa).

The 151-residue stretch at 18–168 (GWRHACHAML…LENTFIGNAR (151 aa)) folds into the Nudix hydrolase domain. The substrate site is built by histidine 24, arginine 50, and phenylalanine 57. The Mn(2+) site is built by glycine 59, glutamate 76, glutamate 80, and histidine 99. The short motif at 61 to 82 (FVDLRDGSLEDGLNRELGEELG) is the Nudix box element. Positions 166 and 170 each coordinate substrate. Glutamate 173 lines the Mn(2+) pocket.

Belongs to the Nudix hydrolase family. NUDT16 subfamily. In terms of assembly, homodimer. The cofactor is Mg(2+). It depends on Mn(2+) as a cofactor. Co(2+) serves as cofactor.

It is found in the nucleus. It localises to the nucleolus. The protein resides in the nucleoplasm. The protein localises to the cytoplasm. The catalysed reaction is a 5'-end (N(7)-methyl 5'-triphosphoguanosine)-ribonucleoside in mRNA + H2O = N(7)-methyl-GDP + a 5'-end phospho-ribonucleoside in mRNA + 2 H(+). It carries out the reaction IDP + H2O = IMP + phosphate + H(+). It catalyses the reaction dIDP + H2O = dIMP + phosphate + H(+). The enzyme catalyses a 5'-end NAD(+)-phospho-ribonucleoside in mRNA + H2O = a 5'-end phospho-ribonucleoside in mRNA + NAD(+) + H(+). The catalysed reaction is a 5'-end FAD-phospho-ribonucleoside in mRNA + H2O = a 5'-end phospho-adenosine-phospho-ribonucleoside in mRNA + FMN + 2 H(+). It carries out the reaction a 5'-end CoA-ribonucleoside in mRNA + H2O = a 5'-end phospho-adenosine-phospho-ribonucleoside in mRNA + (R)-4'-phosphopantetheine + 2 H(+). Functionally, RNA-binding and decapping enzyme that catalyzes the cleavage of the cap structure of snoRNAs and mRNAs in a metal-dependent manner. Part of the U8 snoRNP complex that is required for the accumulation of mature 5.8S and 28S rRNA. Has diphosphatase activity and removes m7G and/or m227G caps from U8 snoRNA and leaves a 5'monophosphate on the RNA. Also catalyzes the cleavage of the cap structure on mRNAs. Does not hydrolyze cap analog structures like 7-methylguanosine nucleoside triphosphate (m7GpppG). Also hydrolysis m7G- and m227G U3-capped RNAs but with less efficiencies. Has broad substrate specificity with manganese or cobalt as cofactor and can act on various RNA species. Binds to the U8 snoRNA; metal is not required for RNA-binding. May play a role in the regulation of snoRNAs and mRNAs degradation. Also acts as a phosphatase; hydrolyzes the non-canonical purine nucleotides inosine diphosphate (IDP) and deoxyinosine diphosphate (dITP) as well as guanosine diphosphate (GDP), deoxyguanosine diphosphate (dGDP), xanthine diphosphate (XDP), inosine triphosphate (ITP) and deoxyinosine triphosphate (ITP) to their respective monophosphate derivatives and does not distinguish between the deoxy- and ribose forms. The order of activity with different substrates is IDP &gt; dIDP &gt;&gt; GDP = dGDP &gt; XDP = ITP = dITP. Binds strongly to GTP, ITP and XTP. Participates in the hydrolysis of dIDP/IDP and probably excludes non-canonical purines from RNA and DNA precursor pools, thus preventing their incorporation into RNA and DNA and avoiding chromosomal lesions. Exhibits decapping activity towards NAD-capped RNAs and FAD-capped RNAs. Exhibits decapping activity towards dpCoA-capped RNAs in vitro. The polypeptide is U8 snoRNA-decapping enzyme (NUDT16) (Ovis aries (Sheep)).